A 435-amino-acid chain; its full sequence is Xylose isomerase (435 aa).

Residues D306 and D308 each contribute to the Mg(2+) site.

This sequence belongs to the xylose isomerase family. In terms of assembly, homotetramer. The cofactor is Mg(2+).

It localises to the cytoplasm. It catalyses the reaction alpha-D-xylose = alpha-D-xylulofuranose. The sequence is that of Xylose isomerase from Brucella melitensis biotype 2 (strain ATCC 23457).